The sequence spans 120 residues: ATP-dependent Clp protease adapter protein ClpS (120 aa).

The disordered stretch occupies residues 9-32 (LTFNQDHPAEHEDDSSGIAVQESK).

It belongs to the ClpS family. Binds to the N-terminal domain of the chaperone ClpA.

Its function is as follows. Involved in the modulation of the specificity of the ClpAP-mediated ATP-dependent protein degradation. In Ectopseudomonas mendocina (strain ymp) (Pseudomonas mendocina), this protein is ATP-dependent Clp protease adapter protein ClpS.